A 506-amino-acid chain; its full sequence is Tabersonine 16-hydroxylase 1 (506 aa).

The helical transmembrane segment at 1–21 (MEFYYFLYLAFLLFCFILSKT) threads the bilayer. Heme is bound at residue Cys-447.

It belongs to the cytochrome P450 family. It depends on heme as a cofactor. Predominantly expressed in young leaves of mature plants. Low expression in roots and flowers, but not detected in stems and old leaves. Found predominantly in leaf epidermis. Barely detected in roots, internodes, young and mature leaves, and flower buds, but relatively abundant in fully developed flowers. Not detected in leaf epidermal cells.

The protein resides in the endoplasmic reticulum membrane. It catalyses the reaction (-)-tabersonine + reduced [NADPH--hemoprotein reductase] + O2 = 16-hydroxytabersonine + oxidized [NADPH--hemoprotein reductase] + H2O + H(+). It functions in the pathway alkaloid biosynthesis; vindoline biosynthesis. Involved in the flower biosynthesis of vindoline, a precursor of vinblastine and vincristine. Hydroxylates specifically tabersonine, 2,3-dihydrotabersonine and 2,3-dihydro-3-hydroxytabersonine, but has no activity with naringenin, tryptamine, secologanin, strictosidine, ajmalicine, vindoline and catharanthine. The sequence is that of Tabersonine 16-hydroxylase 1 from Catharanthus roseus (Madagascar periwinkle).